The following is a 466-amino-acid chain: Asparagine--tRNA ligase (466 aa).

This sequence belongs to the class-II aminoacyl-tRNA synthetase family. In terms of assembly, homodimer.

The protein resides in the cytoplasm. The catalysed reaction is tRNA(Asn) + L-asparagine + ATP = L-asparaginyl-tRNA(Asn) + AMP + diphosphate + H(+). The polypeptide is Asparagine--tRNA ligase (Wigglesworthia glossinidia brevipalpis).